Reading from the N-terminus, the 539-residue chain is Bifunctional purine biosynthesis protein PurH (539 aa).

The 152-residue stretch at 8–159 (FPIPDLHRVR…KNYAYTGVVT (152 aa)) folds into the MGS-like domain.

It belongs to the PurH family.

The catalysed reaction is (6R)-10-formyltetrahydrofolate + 5-amino-1-(5-phospho-beta-D-ribosyl)imidazole-4-carboxamide = 5-formamido-1-(5-phospho-D-ribosyl)imidazole-4-carboxamide + (6S)-5,6,7,8-tetrahydrofolate. It catalyses the reaction IMP + H2O = 5-formamido-1-(5-phospho-D-ribosyl)imidazole-4-carboxamide. The protein operates within purine metabolism; IMP biosynthesis via de novo pathway; 5-formamido-1-(5-phospho-D-ribosyl)imidazole-4-carboxamide from 5-amino-1-(5-phospho-D-ribosyl)imidazole-4-carboxamide (10-formyl THF route): step 1/1. Its pathway is purine metabolism; IMP biosynthesis via de novo pathway; IMP from 5-formamido-1-(5-phospho-D-ribosyl)imidazole-4-carboxamide: step 1/1. This chain is Bifunctional purine biosynthesis protein PurH, found in Bartonella tribocorum (strain CIP 105476 / IBS 506).